We begin with the raw amino-acid sequence, 551 residues long: MKKVLNKYSRRLTEDKSQGASQAMLYGTEMNDADMHKPQIGIGSVWYEGNTCNMHLNQLAQFVKDSVEKENLKGMRFNTIGVSDGISMGTDGMSYSLQSRDLIADSIETVMSAHWYDGLVSIPGCDKNMPGCMMALGRLNRPGFVIYGGTIQAGVMRGKPIDIVTAFQSYGACLSGQITEQERQETIKKACPGAGACGGMYTANTMACAIEALGMSLPFSSSTSATSVEKVQECDKAGETIKNLLELDIKPRDIMTRKAFENAMVLITVMGGSTNAVLHLLAMASSVDVDLSIDDFQEIANKTPVLADFKPSGKYVKANLHAIGGTPAVMKMLLKAGMLHGDCLTVTGKTLAENLENVADLPEDNTIIHKLDNPIKKTGHLQILKGNVAPEGSVAKITGKEGEIFEGVANVFDSEEEMVAAVETGKVKKGDVIVIRYEGPKGGPGMPEMLKPTSLIMGAGLGQDVALITDGRFSGGSHGFIVGHITPEAYEGGMIALLENGDKITIDAINNVINVDLSDQEIAQRKSKWRASKQKASRGTLKKYIKTVSSA.

A [2Fe-2S] cluster-binding site is contributed by Cys-52. Mg(2+) is bound at residue Asp-84. Cys-125 is a [2Fe-2S] cluster binding site. Mg(2+)-binding residues include Asp-126 and Lys-127. Residue Lys-127 is modified to N6-carboxylysine. Cys-197 serves as a coordination point for [2Fe-2S] cluster. Glu-448 serves as a coordination point for Mg(2+). Residue Ser-474 is the Proton acceptor of the active site.

It belongs to the IlvD/Edd family. Homodimer. It depends on [2Fe-2S] cluster as a cofactor. Requires Mg(2+) as cofactor.

The catalysed reaction is (2R)-2,3-dihydroxy-3-methylbutanoate = 3-methyl-2-oxobutanoate + H2O. It carries out the reaction (2R,3R)-2,3-dihydroxy-3-methylpentanoate = (S)-3-methyl-2-oxopentanoate + H2O. The protein operates within amino-acid biosynthesis; L-isoleucine biosynthesis; L-isoleucine from 2-oxobutanoate: step 3/4. It participates in amino-acid biosynthesis; L-valine biosynthesis; L-valine from pyruvate: step 3/4. Its function is as follows. Functions in the biosynthesis of branched-chain amino acids. Catalyzes the dehydration of (2R,3R)-2,3-dihydroxy-3-methylpentanoate (2,3-dihydroxy-3-methylvalerate) into 2-oxo-3-methylpentanoate (2-oxo-3-methylvalerate) and of (2R)-2,3-dihydroxy-3-methylbutanoate (2,3-dihydroxyisovalerate) into 2-oxo-3-methylbutanoate (2-oxoisovalerate), the penultimate precursor to L-isoleucine and L-valine, respectively. The chain is Dihydroxy-acid dehydratase from Francisella tularensis subsp. tularensis (strain FSC 198).